A 218-amino-acid chain; its full sequence is MPMILGYWDIRGLAHAIRLLLEYTDTNYEERQYSVGDAPDYDRSQWLNEKFKLGLDFPNLPYLIDGTHKLTQSNAILRYIARKHNLCGETEEEMIRVDILENQVMDVRLAMARICYSPDFEKLKPGFLKEIPEKIKLFSEFLGKRPWFAGDKLTYVDFLVYDVLDMHRIFEPKCLDAFPNLKDFISRFEGLKKISAYMKSSRFLPGPLFMKLAVWGNK.

A GST N-terminal domain is found at 2–88 (PMILGYWDIR…YIARKHNLCG (87 aa)). Glutathione is bound by residues 7 to 8 (YW), 43 to 46 (RSQW), Lys50, 59 to 60 (NL), and 72 to 73 (QS). In terms of domain architecture, GST C-terminal spans 90–208 (TEEEMIRVDI…KSSRFLPGPL (119 aa)). Tyr116 is a binding site for substrate.

The protein belongs to the GST superfamily. Mu family. In terms of assembly, homodimer.

The protein localises to the cytoplasm. The enzyme catalyses RX + glutathione = an S-substituted glutathione + a halide anion + H(+). The catalysed reaction is prostaglandin A2 + glutathione = prostaglandin A2-S-(R)-glutathione. It catalyses the reaction prostaglandin J2 + glutathione = prostaglandin J2-S-(R)-glutathione. It carries out the reaction prostaglandin J2 + glutathione = prostaglandin J2-S-(S)-glutathione. The enzyme catalyses prostaglandin A2 + glutathione = prostaglandin A2-S-(S)-glutathione. The catalysed reaction is 11(S)-hydroxy-14(S),15(S)-epoxy-(5Z,8Z,12E)-eicosatrienoate + glutathione = (11S,15S)-dihydroxy-14(R)-S-glutathionyl-(5Z,8Z,12E)-eicosatrienoate. Conjugation of reduced glutathione to a wide number of exogenous and endogenous hydrophobic electrophiles. Protects against the thiol-mediated metal-catalyzed oxidative inactivation of enzymes. Involved in the formation of glutathione conjugates of both prostaglandin A2 (PGA2) and prostaglandin J2 (PGJ2). Participates in the formation of novel hepoxilin regioisomers. This chain is Glutathione S-transferase Mu 1 (GSTM1), found in Bos taurus (Bovine).